We begin with the raw amino-acid sequence, 102 residues long: MSMTSPSPVTGGMVDGSVLVRMATKPPVIGLITVLFLLVIGACVYCCIRVFLAARLWRATPLGRATVAYQVLRTLGPQAGSHAPPTVGIATQEPYRTIYMPD.

The chain crosses the membrane as a helical span at residues 28-48 (VIGLITVLFLLVIGACVYCCI).

It localises to the host membrane. This chain is Protein ORF28 (ORF28), found in Homo sapiens (Human).